A 423-amino-acid polypeptide reads, in one-letter code: Imidazolonepropionase (423 aa).

The Fe(3+) site is built by His-78 and His-80. Zn(2+) contacts are provided by His-78 and His-80. Positions 87, 150, and 183 each coordinate 4-imidazolone-5-propanoate. Tyr-150 lines the N-formimidoyl-L-glutamate pocket. Fe(3+) is bound at residue His-247. Zn(2+) is bound at residue His-247. Residue Glu-250 coordinates 4-imidazolone-5-propanoate. Asp-322 is a binding site for Fe(3+). Zn(2+) is bound at residue Asp-322. Positions 324 and 326 each coordinate N-formimidoyl-L-glutamate. Ser-327 is a binding site for 4-imidazolone-5-propanoate.

This sequence belongs to the metallo-dependent hydrolases superfamily. HutI family. It depends on Zn(2+) as a cofactor. Fe(3+) is required as a cofactor.

Its subcellular location is the cytoplasm. It catalyses the reaction 4-imidazolone-5-propanoate + H2O = N-formimidoyl-L-glutamate. It participates in amino-acid degradation; L-histidine degradation into L-glutamate; N-formimidoyl-L-glutamate from L-histidine: step 3/3. Its function is as follows. Catalyzes the hydrolytic cleavage of the carbon-nitrogen bond in imidazolone-5-propanoate to yield N-formimidoyl-L-glutamate. It is the third step in the universal histidine degradation pathway. The polypeptide is Imidazolonepropionase (Bacillus cytotoxicus (strain DSM 22905 / CIP 110041 / 391-98 / NVH 391-98)).